The chain runs to 404 residues: Argininosuccinate synthase (404 aa).

ATP is bound by residues 10 to 18 and alanine 38; that span reads AYSGGVDTS. Residue tyrosine 89 coordinates L-citrulline. Glycine 119 is an ATP binding site. Residues threonine 121, asparagine 125, and aspartate 126 each contribute to the L-aspartate site. Residue asparagine 125 coordinates L-citrulline. Residues arginine 129, serine 177, serine 186, glutamate 262, and tyrosine 274 each coordinate L-citrulline.

The protein belongs to the argininosuccinate synthase family. Type 1 subfamily. Homotetramer.

Its subcellular location is the cytoplasm. The catalysed reaction is L-citrulline + L-aspartate + ATP = 2-(N(omega)-L-arginino)succinate + AMP + diphosphate + H(+). It functions in the pathway amino-acid biosynthesis; L-arginine biosynthesis; L-arginine from L-ornithine and carbamoyl phosphate: step 2/3. The chain is Argininosuccinate synthase from Prochlorococcus marinus (strain MIT 9312).